The primary structure comprises 126 residues: DNA-directed RNA polymerase subunit omega (126 aa).

This sequence belongs to the RNA polymerase subunit omega family. As to quaternary structure, the RNAP catalytic core consists of 2 alpha, 1 beta, 1 beta' and 1 omega subunit. When a sigma factor is associated with the core the holoenzyme is formed, which can initiate transcription.

It catalyses the reaction RNA(n) + a ribonucleoside 5'-triphosphate = RNA(n+1) + diphosphate. Its function is as follows. Promotes RNA polymerase assembly. Latches the N- and C-terminal regions of the beta' subunit thereby facilitating its interaction with the beta and alpha subunits. This Paramagnetospirillum magneticum (strain ATCC 700264 / AMB-1) (Magnetospirillum magneticum) protein is DNA-directed RNA polymerase subunit omega.